Reading from the N-terminus, the 423-residue chain is Gamma-glutamyl phosphate reductase (423 aa).

This sequence belongs to the gamma-glutamyl phosphate reductase family.

Its subcellular location is the cytoplasm. The enzyme catalyses L-glutamate 5-semialdehyde + phosphate + NADP(+) = L-glutamyl 5-phosphate + NADPH + H(+). The protein operates within amino-acid biosynthesis; L-proline biosynthesis; L-glutamate 5-semialdehyde from L-glutamate: step 2/2. Catalyzes the NADPH-dependent reduction of L-glutamate 5-phosphate into L-glutamate 5-semialdehyde and phosphate. The product spontaneously undergoes cyclization to form 1-pyrroline-5-carboxylate. The sequence is that of Gamma-glutamyl phosphate reductase from Pseudomonas putida (strain GB-1).